The primary structure comprises 1086 residues: ATP-dependent helicase/deoxyribonuclease subunit B (1086 aa).

It belongs to the helicase family. AddB/RexB type 2 subfamily. In terms of assembly, heterodimer of AddA and RexB. The cofactor is Mg(2+).

In terms of biological role, the heterodimer acts as both an ATP-dependent DNA helicase and an ATP-dependent, dual-direction single-stranded exonuclease. Recognizes the chi site generating a DNA molecule suitable for the initiation of homologous recombination. This subunit has 5' -&gt; 3' nuclease activity but not helicase activity. This Streptococcus uberis (strain ATCC BAA-854 / 0140J) protein is ATP-dependent helicase/deoxyribonuclease subunit B.